The following is a 231-amino-acid chain: Eukaryotic translation initiation factor 4E allele A (231 aa).

Residues 1–20 show a composition bias toward basic and acidic residues; the sequence is MAAAEMERTTSFDAAEKLKA. The interval 1-36 is disordered; the sequence is MAAAEMERTTSFDAAEKLKAADAGGGEVDDELEEGE. Positions 27-36 are enriched in acidic residues; that stretch reads EVDDELEEGE. 2 EIF4G-binding regions span residues 56–59 and 66–102; these read HPLE and FDSP…NNIH. MRNA-binding positions include 74–79, K106, and 124–125; these read RQTAWG and WE. An intrachain disulfide couples C129 to C167. The EIF4G-binding stretch occupies residues 150–159; the sequence is YTLLAMIGHQ. MRNA-binding positions include 174–179 and 219–223; these read RSKGEK and KRLDR.

Belongs to the eukaryotic initiation factor 4E family. In terms of assembly, EIF4F is a multi-subunit complex, the composition of which varies with external and internal environmental conditions. It is composed of at least EIF4A, EIF4E and EIF4G. EIF4E is also known to interact with other partners. In higher plants two isoforms of EIF4F have been identified, named isoform EIF4F and isoform EIF(iso)4F. Isoform EIF4F has subunits p220 and p26, whereas isoform EIF(iso)4F has subunits p82 and p28. (Microbial infection) Interacts with viral genome-linked protein (VPg); this interaction is possible in susceptible hosts but impaired in resistant plants. Post-translationally, according to the redox status, the Cys-129-Cys-167 disulfide bridge may have a role in regulating protein function by affecting its ability to bind capped mRNA.

Its subcellular location is the nucleus. The protein resides in the cytoplasm. Component of the protein complex eIF4F, which is involved in the recognition of the mRNA cap, ATP-dependent unwinding of 5'-terminal secondary structure and recruitment of mRNA to the ribosome. Recognizes and binds the 7-methylguanosine-containing mRNA cap during an early step in the initiation of protein synthesis and facilitates ribosome binding by inducing the unwinding of the mRNAs secondary structures. Key component of recessive resistance to potyviruses. In terms of biological role, (Microbial infection) Susceptibility host factor required for viral infection (e.g. Potato virus Y (PVY)) by recruiting viral RNAs to the host ribosomal complex via an interaction with viral genome-linked protein (VPg). The sequence is that of Eukaryotic translation initiation factor 4E allele A from Solanum tuberosum (Potato).